The chain runs to 584 residues: Putative adenine deaminase BA_3032/GBAA_3032/BAS2818 (584 aa).

Belongs to the metallo-dependent hydrolases superfamily. Adenine deaminase family.

The catalysed reaction is adenine + H2O + H(+) = hypoxanthine + NH4(+). The polypeptide is Putative adenine deaminase BA_3032/GBAA_3032/BAS2818 (Bacillus anthracis).